Consider the following 344-residue polypeptide: Protein BIM1 (344 aa).

N-acetylserine is present on S2. The 102-residue stretch at 6 to 107 (GESRTELLTW…FLQWLKKHWI (102 aa)) folds into the Calponin-homology (CH) domain. The disordered stretch occupies residues 126–173 (IITNNSATKPRTVSNPTTAKRSSSTGTGSAMSGGLATRHSSLGINGSR). A compositionally biased stretch (polar residues) spans 127–146 (ITNNSATKPRTVSNPTTAKR). The span at 147-159 (SSSTGTGSAMSGG) shows a compositional bias: low complexity. Residue S157 is modified to Phosphoserine. Residues 163-173 (RHSSLGINGSR) show a composition bias toward polar residues. The region spanning 188–281 (ELTKSQETIG…LYATAEGFEM (94 aa)) is the EB1 C-terminal domain. Residues 292–312 (NLGEHGTVPNQGGYANSNGEV) are disordered.

This sequence belongs to the MAPRE family.

The protein resides in the cytoplasm. It is found in the cytoskeleton. Functionally, binds microtubules. In Saccharomyces cerevisiae (strain ATCC 204508 / S288c) (Baker's yeast), this protein is Protein BIM1 (BIM1).